The following is a 284-amino-acid chain: NH(3)-dependent NAD(+) synthetase (284 aa).

An ATP-binding site is contributed by 51 to 58; the sequence is GISGGIDS. D57 serves as a coordination point for Mg(2+). A deamido-NAD(+)-binding site is contributed by R148. T168 is an ATP binding site. E173 provides a ligand contact to Mg(2+). Residues K181 and D188 each contribute to the deamido-NAD(+) site. Positions 197 and 219 each coordinate ATP. 268-269 contributes to the deamido-NAD(+) binding site; it reads HK.

It belongs to the NAD synthetase family. As to quaternary structure, homodimer.

It catalyses the reaction deamido-NAD(+) + NH4(+) + ATP = AMP + diphosphate + NAD(+) + H(+). It functions in the pathway cofactor biosynthesis; NAD(+) biosynthesis; NAD(+) from deamido-NAD(+) (ammonia route): step 1/1. In terms of biological role, catalyzes the ATP-dependent amidation of deamido-NAD to form NAD. Uses ammonia as a nitrogen source. The chain is NH(3)-dependent NAD(+) synthetase from Burkholderia mallei (strain NCTC 10247).